Consider the following 441-residue polypeptide: ATP-dependent protease ATPase subunit HslU (441 aa).

ATP is bound by residues I17, 60-65, D253, E319, and R391; that span reads GVGKTE.

The protein belongs to the ClpX chaperone family. HslU subfamily. As to quaternary structure, a double ring-shaped homohexamer of HslV is capped on each side by a ring-shaped HslU homohexamer. The assembly of the HslU/HslV complex is dependent on binding of ATP.

The protein resides in the cytoplasm. ATPase subunit of a proteasome-like degradation complex; this subunit has chaperone activity. The binding of ATP and its subsequent hydrolysis by HslU are essential for unfolding of protein substrates subsequently hydrolyzed by HslV. HslU recognizes the N-terminal part of its protein substrates and unfolds these before they are guided to HslV for hydrolysis. In Legionella pneumophila (strain Paris), this protein is ATP-dependent protease ATPase subunit HslU.